Consider the following 455-residue polypeptide: Oxidative stress induced growth inhibitor homolog osgn-1 (455 aa).

Belongs to the OKL38 family. NADPH serves as cofactor.

It localises to the midbody. In terms of biological role, monooxygenase catalytic activity. Involved in regulation of cytokinesis; promotes rho-1/RhoA activity, probably acting locally at the midbody in late cytokinesis. Monooxygenase activity is required to stabilize structures between primordial germ cells (PGCs), termed intercellular bridges. Dispensable for fertility. This chain is Oxidative stress induced growth inhibitor homolog osgn-1, found in Caenorhabditis elegans.